The sequence spans 414 residues: Esterase FrsA (414 aa).

The protein belongs to the FrsA family.

It catalyses the reaction a carboxylic ester + H2O = an alcohol + a carboxylate + H(+). In terms of biological role, catalyzes the hydrolysis of esters. In Escherichia coli O81 (strain ED1a), this protein is Esterase FrsA.